The sequence spans 163 residues: Urease accessory protein UreE (163 aa).

The segment at 144 to 163 (QPEPGAYGGSSAGSHDGHHH) is disordered.

Belongs to the UreE family.

Its subcellular location is the cytoplasm. Functionally, involved in urease metallocenter assembly. Binds nickel. Probably functions as a nickel donor during metallocenter assembly. The sequence is that of Urease accessory protein UreE from Aliivibrio fischeri (strain MJ11) (Vibrio fischeri).